A 679-amino-acid chain; its full sequence is Membrane-spanning 4-domains subfamily A member 14 (679 aa).

Transmembrane regions (helical) follow at residues 50–70 (ILLA…YIGF), 76–96 (LVVL…TGYL), 110–130 (VTGM…FTIL), and 141–161 (MPSF…LFFL). Disordered regions lie at residues 218–259 (VSQP…EKKP), 331–363 (SEQT…ILSQ), 469–491 (KEWK…LNQQ), and 505–633 (VQAK…QAQV). Over residues 224–234 (KGREFVPDEQK) the composition is skewed to basic and acidic residues. The span at 337–348 (SKSTSSHVKQSS) shows a compositional bias: low complexity. Residues 469–478 (KEWKSEEELH) are compositionally biased toward basic and acidic residues. Polar residues-rich tracts occupy residues 519–535 (DQQS…SLDQ) and 550–563 (KQAQ…QLPD). Residues 580–601 (QSKDGQVKDQQTDKEQNSKKQT) show a composition bias toward basic and acidic residues. Positions 619–632 (GQFQNVQAEGQQAQ) are enriched in polar residues.

It belongs to the MS4A family.

It localises to the membrane. In terms of biological role, may be involved in signal transduction as a component of a multimeric receptor complex. The sequence is that of Membrane-spanning 4-domains subfamily A member 14 (MS4A14) from Homo sapiens (Human).